Reading from the N-terminus, the 310-residue chain is uncharacterized protein (310 aa).

Helical transmembrane passes span 1–21 (MIYF…MFSK), 38–58 (FFFY…VVYT), 74–94 (TSYF…FFIF), 110–130 (YGLW…SFLF), 135–155 (WILY…IFFS), 194–214 (IFIT…IVFS), 228–248 (LFII…MYLF), 256–276 (FPIM…KILI), and 284–304 (IFLT…INLI).

Belongs to the TerC family.

The protein localises to the cell membrane. This is an uncharacterized protein from Buchnera aphidicola subsp. Schizaphis graminum (strain Sg).